The primary structure comprises 674 residues: Alpha-L-arabinofuranosidase 2 (674 aa).

Residues 1-24 (MDMETSWRFLRSVCLLSFILGSFS) form the signal peptide. N-linked (GlcNAc...) asparagine glycans are attached at residues N48, N180, N199, N210, N361, N522, and N548.

It belongs to the glycosyl hydrolase 51 family. High expression in flowers, siliques and stems. Observed in the vasculature of older root tissue, at the tip of anthers and in the petal blade of fully developed flowers, in floral abscission zones and in silique replum tissue. Expressed in the cambium and phloem, but not in the xylem or in the vascular system of floral tissues.

The protein resides in the secreted. Its subcellular location is the extracellular space. It localises to the extracellular matrix. The enzyme catalyses Hydrolysis of terminal non-reducing alpha-L-arabinofuranoside residues in alpha-L-arabinosides.. In terms of biological role, may be involved in the coordinated dissolution of the cell wall matrix during abscission and in the secondary cell wall formation in xylem vessels. This is Alpha-L-arabinofuranosidase 2 (ASD2) from Arabidopsis thaliana (Mouse-ear cress).